A 968-amino-acid chain; its full sequence is Alanine--tRNA ligase, cytoplasmic (968 aa).

Residue Met-1 is modified to N-acetylmethionine. Ser-3 is modified (phosphoserine). The residue at position 19 (Lys-19) is an N6-acetyllysine. ATP-binding positions include Arg-77, His-95, Trp-176, and 214-216; that span reads IWN. Asn-216 and Asp-239 together coordinate L-alanine. Residue Gly-243 coordinates ATP. Phosphoserine occurs at positions 399 and 555. Zn(2+) is bound by residues His-605, His-609, Cys-723, and His-727. A Nuclear localization signal motif is present at residues 750 to 763; the sequence is RRIVAVTGAEAQKA. Residue Lys-876 is modified to N6-acetyllysine. The residue at position 943 (Lys-943) is an N6,N6,N6-trimethyllysine; alternate. Lys-943 is subject to N6,N6-dimethyllysine; alternate. Residue Lys-943 is modified to N6-methyllysine; alternate.

Belongs to the class-II aminoacyl-tRNA synthetase family. In terms of assembly, monomer. Interacts with ANKRD16; the interaction is direct. It depends on Zn(2+) as a cofactor. In terms of processing, ISGylated. Methylation at 'Lys-943' by METTL21C.

It is found in the cytoplasm. Its subcellular location is the nucleus. The catalysed reaction is tRNA(Ala) + L-alanine + ATP = L-alanyl-tRNA(Ala) + AMP + diphosphate. It catalyses the reaction (S)-lactate + ATP + H(+) = (S)-lactoyl-AMP + diphosphate. It carries out the reaction (S)-lactoyl-AMP + L-lysyl-[protein] = N(6)-[(S)-lactoyl]-L-lysyl-[protein] + AMP + 2 H(+). The protein lactyltransferase activity is inhibited by beta-alanine. In terms of biological role, catalyzes the attachment of alanine to tRNA(Ala) in a two-step reaction: alanine is first activated by ATP to form Ala-AMP and then transferred to the acceptor end of tRNA(Ala). Also edits incorrectly charged tRNA(Ala) via its editing domain. In presence of high levels of lactate, also acts as a protein lactyltransferase that mediates lactylation of lysine residues in target proteins, such as TEAD1, TP53/p53 and YAP1. Protein lactylation takes place in a two-step reaction: lactate is first activated by ATP to form lactate-AMP and then transferred to lysine residues of target proteins. Acts as an inhibitor of TP53/p53 activity by catalyzing lactylation of TP53/p53. Acts as a positive regulator of the Hippo pathway by mediating lactylation of TEAD1 and YAP1. This is Alanine--tRNA ligase, cytoplasmic (Aars1) from Rattus norvegicus (Rat).